We begin with the raw amino-acid sequence, 1475 residues long: Alpha-glucan water dikinase, chloroplastic (1475 aa).

A chloroplast-targeting transit peptide spans 1-85; that stretch reads MSNSIGRNVL…HRPVLITPRA (85 aa). H1077 (tele-phosphohistidine intermediate) is an active-site residue.

This sequence belongs to the PEP-utilizing enzyme family. In terms of assembly, homodimer. Requires Mg(2+) as cofactor.

It is found in the plastid. The protein resides in the chloroplast. It carries out the reaction [(1-&gt;4)-alpha-D-glucosyl](n) + n ATP + n H2O = [(1-&gt;4)-6-phospho-alpha-D-glucosyl](n) + n AMP + n phosphate + 2n H(+). Functionally, mediates the incorporation of phosphate into starch-like alpha-glucan, mostly at the C-6 position of glucose units. Acts as an overall regulator of starch mobilization. Required for starch degradation, suggesting that the phosphate content of starch regulates its degradability. The polypeptide is Alpha-glucan water dikinase, chloroplastic (R1) (Citrus reticulata (Tangerine)).